The sequence spans 114 residues: Neurotrophic factor BDNF precursor form (114 aa).

Intrachain disulfides connect Cys-14–Cys-81, Cys-59–Cys-110, and Cys-69–Cys-112.

This sequence belongs to the NGF-beta family.

The protein resides in the secreted. In terms of biological role, promotes the survival of neuronal populations that are all located either in the central nervous system or directly connected to it. The sequence is that of Neurotrophic factor BDNF precursor form (bdnf) from Xenopus laevis (African clawed frog).